Here is a 368-residue protein sequence, read N- to C-terminus: Ribosomal RNA large subunit methyltransferase M (368 aa).

S-adenosyl-L-methionine is bound by residues Ser199, 232–235, Asp251, Asp271, and Asp287; that span reads APGG. Residue Lys316 is the Proton acceptor of the active site.

This sequence belongs to the class I-like SAM-binding methyltransferase superfamily. RNA methyltransferase RlmE family. RlmM subfamily. As to quaternary structure, monomer.

It localises to the cytoplasm. The enzyme catalyses cytidine(2498) in 23S rRNA + S-adenosyl-L-methionine = 2'-O-methylcytidine(2498) in 23S rRNA + S-adenosyl-L-homocysteine + H(+). Its function is as follows. Catalyzes the 2'-O-methylation at nucleotide C2498 in 23S rRNA. The polypeptide is Ribosomal RNA large subunit methyltransferase M (Aromatoleum aromaticum (strain DSM 19018 / LMG 30748 / EbN1) (Azoarcus sp. (strain EbN1))).